We begin with the raw amino-acid sequence, 203 residues long: Endo-type membrane-bound lytic murein transglycosylase A (203 aa).

An N-terminal signal peptide occupies residues 1 to 15 (MKLRWFAFLIVLLAG). Cys16 carries N-palmitoyl cysteine lipidation. Cys16 is lipidated: S-diacylglycerol cysteine.

This sequence belongs to the transglycosylase Slt family.

It is found in the cell outer membrane. The catalysed reaction is Endolytic cleavage of the (1-&gt;4)-beta-glycosidic linkage between N-acetylmuramic acid (MurNAc) and N-acetylglucosamine (GlcNAc) residues in peptidoglycan with concomitant formation of a 1,6-anhydrobond in the MurNAc residue.. In terms of biological role, murein-degrading enzyme. May play a role in recycling of muropeptides during cell elongation and/or cell division. Preferentially cleaves at a distance of more than two disaccharide units from the ends of the glycan chain. This Escherichia coli O127:H6 (strain E2348/69 / EPEC) protein is Endo-type membrane-bound lytic murein transglycosylase A.